We begin with the raw amino-acid sequence, 180 residues long: MSRIGKKIILLPTNLSTQFDGQTITVTGPKGTLSRTLPAGINLEILNDTIAVKTSGQTKMASQLHGLSRTLISNMIEGVSNGFFKKLQIQGVGYRSQIDNQDLILSVGYSHVVKIKPPANIEIKVENNTNITVSGIDKEVVGQVASTIRSIRPPEPYKGKGIRYQGEFVRRKAGKAGKGK.

The protein belongs to the universal ribosomal protein uL6 family. In terms of assembly, part of the 50S ribosomal subunit.

It localises to the plastid. The protein resides in the chloroplast. Functionally, binds 23S rRNA. The chain is Large ribosomal subunit protein uL6c (rpl6) from Pyropia yezoensis (Susabi-nori).